Here is a 181-residue protein sequence, read N- to C-terminus: ATP synthase subunit delta (181 aa).

Belongs to the ATPase delta chain family. In terms of assembly, F-type ATPases have 2 components, F(1) - the catalytic core - and F(0) - the membrane proton channel. F(1) has five subunits: alpha(3), beta(3), gamma(1), delta(1), epsilon(1). F(0) has three main subunits: a(1), b(2) and c(10-14). The alpha and beta chains form an alternating ring which encloses part of the gamma chain. F(1) is attached to F(0) by a central stalk formed by the gamma and epsilon chains, while a peripheral stalk is formed by the delta and b chains.

The protein resides in the cell membrane. In terms of biological role, f(1)F(0) ATP synthase produces ATP from ADP in the presence of a proton or sodium gradient. F-type ATPases consist of two structural domains, F(1) containing the extramembraneous catalytic core and F(0) containing the membrane proton channel, linked together by a central stalk and a peripheral stalk. During catalysis, ATP synthesis in the catalytic domain of F(1) is coupled via a rotary mechanism of the central stalk subunits to proton translocation. Functionally, this protein is part of the stalk that links CF(0) to CF(1). It either transmits conformational changes from CF(0) to CF(1) or is implicated in proton conduction. The sequence is that of ATP synthase subunit delta from Lacticaseibacillus casei (strain BL23) (Lactobacillus casei).